The chain runs to 655 residues: Methyl-accepting chemotaxis protein McpC (655 aa).

The Cytoplasmic segment spans residues 1–8; sequence MFKKLHMK. A helical transmembrane segment spans residues 9-29; that stretch reads IAVFVSIMLIITVVLLMLSSY. Topologically, residues 30–276 are extracellular; sequence LTLKPMITED…LMWISDKMNR (247 aa). Positions 148–225 constitute a Cache domain; it reads WTEPYKDVVT…SNQGKNISKD (78 aa). Residues 277–297 traverse the membrane as a helical segment; sequence ANLWISLIALIITIILSYFLA. The region spanning 298–350 is the HAMP domain; that stretch reads KTITGPIQQLIVKTKAVSAGDLTVRAESKSKDEVGILTRDFNLMVENMKEMVE. At 298-655 the chain is on the cytoplasmic side; that stretch reads KTITGPIQQL…LMNTIAKFTL (358 aa). In terms of domain architecture, Methyl-accepting transducer spans 369-619; that stretch reads VAAETNETSG…ESAAAAEEVN (251 aa).

Belongs to the methyl-accepting chemotaxis (MCP) protein family. In terms of assembly, interacts with FloT. Post-translationally, some glutamine residues are deamidated to glutamate by CheD and subsequently methylated.

It localises to the cell membrane. Its subcellular location is the membrane raft. Its function is as follows. Chemotactic-signal transducers respond to changes in the concentration of attractants and repellents in the environment, transduce a signal from the outside to the inside of the cell, and facilitate sensory adaptation through the variation of the level of methylation. All amino acids serve as attractants in B.subtilis, they appear to cause an increase in the turnover methyl groups, leading to methylation of an unidentified acceptor, while repellents have been shown to cause a decrease in methyl group turnover. The methyl groups are added by a methyltransferase and removed by a methylesterase. McpC is required for taxis to cysteine, proline, threonine, glycine, serine, lysine, valine and arginine and for aspartate, glutamine, histidine and glutamate. Primarily mediates response to positive stimulus of PTS carbohydrates. Greatly influences the duration or magnitude of the response to negative PTS carbohydrate stimulus. The polypeptide is Methyl-accepting chemotaxis protein McpC (mcpC) (Bacillus subtilis (strain 168)).